Consider the following 550-residue polypeptide: MEEGAKIGREHEQQQQQHGRVNGSGRVAAVGGGSGGGGDEIEIEVAAAAGASPSRQHGGLHGDVQAPTWKRFLAHVGPGFVISIAYLDPSNLQTDLVAGSSHRYSLLWVLLFGFIFVLTVQSLAANLGIITGRHLAELCMGEYPKYVKYCLWLLAELGVIAATIPGVLGTALAYNMLLHIPFWAGVLACGACTFLILGLQGYGARKMEFTISVLMLVMATCFFMELGKVNPPAGGVIEGLFIPRPKGDYSTSDAVAMFGSLVVPHNLFLHSSLVLTRKMPYTSKGRKDASTFFLLENALALFIALLVNVAIVSISGTICANNLSFADTSTCSSLTLNSTYVLLKNILGKSSSTVYGVALLVSGQSCMVATSYAGQYIMQGFSGMRKCIIYLVAPCFTLLPSLIICSIGGTLRVHRIINIAAIVLSFVLPFALIPLIKFSSSCTNIGPYKNATSIIRIAWILSLVIIGINIYFFCTSFVAWLVHSDLPRVVNAIISSLVFPFMAAYIAALIYLAFRKVNLSDPFPTNSVSGEIEVQHIQIQEKQEDLGVHL.

Over residues 1–13 (MEEGAKIGREHEQ) the composition is skewed to basic and acidic residues. A disordered region spans residues 1–37 (MEEGAKIGREHEQQQQQHGRVNGSGRVAAVGGGSGGG). A compositionally biased stretch (low complexity) spans 14-29 (QQQQHGRVNGSGRVAA). 12 helical membrane-spanning segments follow: residues 72-92 (FLAH…PSNL), 105-125 (SLLW…SLAA), 151-171 (LWLL…LGTA), 177-197 (LLHI…FLIL), 207-227 (MEFT…MELG), 255-275 (VAMF…SLVL), 292-312 (FFLL…VAIV), 354-374 (VYGV…SYAG), 388-408 (IIYL…CSIG), 416-436 (IINI…IPLI), 457-477 (IAWI…CTSF), and 492-512 (AIIS…LIYL).

The protein belongs to the NRAMP (TC 2.A.55) family.

It is found in the membrane. Probable metal transporter. This chain is Metal transporter Nramp4 (NRAMP4), found in Oryza sativa subsp. japonica (Rice).